The primary structure comprises 701 residues: DNA ligase (701 aa).

Residues 50–54 (DYEYD), 99–100 (SL), and glutamate 130 each bind NAD(+). The active-site N6-AMP-lysine intermediate is lysine 132. Residues arginine 153, glutamate 187, lysine 301, and lysine 325 each contribute to the NAD(+) site. Positions 419, 422, 437, and 442 each coordinate Zn(2+). Positions 626–701 (NEHQKYMNKT…EIITEPFWDN (76 aa)) constitute a BRCT domain.

This sequence belongs to the NAD-dependent DNA ligase family. LigA subfamily. It depends on Mg(2+) as a cofactor. The cofactor is Mn(2+).

It carries out the reaction NAD(+) + (deoxyribonucleotide)n-3'-hydroxyl + 5'-phospho-(deoxyribonucleotide)m = (deoxyribonucleotide)n+m + AMP + beta-nicotinamide D-nucleotide.. In terms of biological role, DNA ligase that catalyzes the formation of phosphodiester linkages between 5'-phosphoryl and 3'-hydroxyl groups in double-stranded DNA using NAD as a coenzyme and as the energy source for the reaction. It is essential for DNA replication and repair of damaged DNA. The protein is DNA ligase of Malacoplasma penetrans (strain HF-2) (Mycoplasma penetrans).